The sequence spans 335 residues: Lipase chaperone (335 aa).

A helical membrane pass occupies residues 1–21 (MSGSILLLPLAIALGLGFFIA).

It belongs to the lipase chaperone family.

It is found in the cell inner membrane. In terms of biological role, may be involved in the folding of the extracellular lipase during its passage through the periplasm. The chain is Lipase chaperone from Stutzerimonas stutzeri (strain A1501) (Pseudomonas stutzeri).